The sequence spans 387 residues: Galactokinase (387 aa).

36–39 is a substrate binding site; the sequence is EHTD. ATP is bound by residues S70 and 125–131; that span reads GAGLSSS. Mg(2+) contacts are provided by S131 and E163. Residue D175 is the Proton acceptor of the active site. Y227 serves as a coordination point for substrate.

It belongs to the GHMP kinase family. GalK subfamily.

It is found in the cytoplasm. It carries out the reaction alpha-D-galactose + ATP = alpha-D-galactose 1-phosphate + ADP + H(+). Its pathway is carbohydrate metabolism; galactose metabolism. Functionally, catalyzes the transfer of the gamma-phosphate of ATP to D-galactose to form alpha-D-galactose-1-phosphate (Gal-1-P). The protein is Galactokinase of Streptomyces coelicolor (strain ATCC BAA-471 / A3(2) / M145).